We begin with the raw amino-acid sequence, 567 residues long: Protein NRT1/ PTR FAMILY 4.5 (567 aa).

A run of 12 helical transmembrane segments spans residues 30–50 (GMLAASFVLAVEILENLAFLA), 70–92 (SSSEVTTFMATAFLLALLGGFLA), 99–118 (FVIFLISASIEFLGLILLTI), 147–167 (AFLFVGLYLVSLGIGGIKGSL), 189–209 (FFNYYVFCLSCGALVAVTFVV), 219–239 (WGFGVSTISIFLSILVFLLGS), 326–346 (IVLKMLPIFGCTIMLNCCLAQ), 374–394 (VFPVVFMLILAPTYDHLIIPF), 411–431 (IGVGLVLSIVAMAVAALVELK), 448–468 (LPITFLWIALQYLFLGSADLF), 491–511 (SLSWASLALGYYLSSVMVPIV), and 535–555 (LFYWLMCVLSVVNFLHYLFWA).

It belongs to the major facilitator superfamily. Proton-dependent oligopeptide transporter (POT/PTR) (TC 2.A.17) family. Expressed in flowers and siliques.

The protein localises to the membrane. Its function is as follows. Involved in abscisic acid transport. The sequence is that of Protein NRT1/ PTR FAMILY 4.5 (NPF4.5) from Arabidopsis thaliana (Mouse-ear cress).